A 144-amino-acid chain; its full sequence is Large ribosomal subunit protein uL16 (144 aa).

Positions 1–16 are enriched in basic residues; that stretch reads MLIPKRVKYRKQHRGR. The interval 1–23 is disordered; it reads MLIPKRVKYRKQHRGRPGGGMAK.

It belongs to the universal ribosomal protein uL16 family. Part of the 50S ribosomal subunit.

Its function is as follows. Binds 23S rRNA and is also seen to make contacts with the A and possibly P site tRNAs. This Pelotomaculum thermopropionicum (strain DSM 13744 / JCM 10971 / SI) protein is Large ribosomal subunit protein uL16.